Reading from the N-terminus, the 187-residue chain is Major allergen Equ c 1 (187 aa).

A signal peptide (or 16, or 21) is located at residues Met-1–Ala-15. Asn-53 and Asn-68 each carry an N-linked (GlcNAc...) asparagine glycan. Cys-83 and Cys-176 are joined by a disulfide.

Belongs to the calycin superfamily. Lipocalin family. Homodimer. In terms of processing, several N-terminal ends may be due to cleavage by signal peptidase at different sites or may be generated by proteolytic processing of the secreted protein. Analysis of the sugar composition shows the presence of GalNAc, Gal, NeuAc, GlcNAc, and Man. May be also O-glycosylated. As to expression, expressed in liver and in sublingual and submaxillary salivary glands. Highly concentrated in secretory fluid such as saliva and urine as well as in hair dandruff extract.

Its subcellular location is the secreted. The protein is Major allergen Equ c 1 of Equus caballus (Horse).